Here is a 426-residue protein sequence, read N- to C-terminus: Histidine--tRNA ligase (426 aa).

It belongs to the class-II aminoacyl-tRNA synthetase family. Homodimer.

The protein localises to the cytoplasm. The catalysed reaction is tRNA(His) + L-histidine + ATP = L-histidyl-tRNA(His) + AMP + diphosphate + H(+). In Streptococcus thermophilus (strain CNRZ 1066), this protein is Histidine--tRNA ligase.